The primary structure comprises 625 residues: tRNA uridine 5-carboxymethylaminomethyl modification enzyme MnmG (625 aa).

Residue 14–19 (GAGHAG) participates in FAD binding. 273 to 287 (GPRYCPSIEDKIVRF) contributes to the NAD(+) binding site.

It belongs to the MnmG family. Homodimer. Heterotetramer of two MnmE and two MnmG subunits. FAD is required as a cofactor.

It localises to the cytoplasm. In terms of biological role, NAD-binding protein involved in the addition of a carboxymethylaminomethyl (cmnm) group at the wobble position (U34) of certain tRNAs, forming tRNA-cmnm(5)s(2)U34. The chain is tRNA uridine 5-carboxymethylaminomethyl modification enzyme MnmG from Clostridium botulinum (strain Loch Maree / Type A3).